The primary structure comprises 391 residues: Elongation factor Tu 2 (391 aa).

In terms of domain architecture, tr-type G spans 10-201 (KPHVNIGTIG…EVDNYIPTPE (192 aa)). The interval 19-26 (GHVDHGKT) is G1. 19-26 (GHVDHGKT) is a binding site for GTP. T26 provides a ligand contact to Mg(2+). Positions 55–59 (GITIS) are G2. The G3 stretch occupies residues 76 to 79 (DCPG). GTP is bound by residues 76–80 (DCPGH) and 131–134 (NKVD). The segment at 131 to 134 (NKVD) is G4. Positions 169–171 (SAL) are G5.

The protein belongs to the TRAFAC class translation factor GTPase superfamily. Classic translation factor GTPase family. EF-Tu/EF-1A subfamily. As to quaternary structure, monomer.

Its subcellular location is the cytoplasm. It carries out the reaction GTP + H2O = GDP + phosphate + H(+). GTP hydrolase that promotes the GTP-dependent binding of aminoacyl-tRNA to the A-site of ribosomes during protein biosynthesis. This Bartonella quintana (strain Toulouse) (Rochalimaea quintana) protein is Elongation factor Tu 2.